A 634-amino-acid polypeptide reads, in one-letter code: Kelch-like protein 31 (634 aa).

A2 carries the n,N,N-trimethylalanine modification. The BTB domain occupies 73–137 (CDLVIGTKTK…AYTGKLTLSL (65 aa)). A BACK domain is found at 172-273 (CMYVVNIAET…SAQDLVNYVQ (102 aa)). Kelch repeat units follow at residues 317 to 365 (VLVT…VMDG), 366 to 419 (FLYV…VFNG), 420 to 466 (LVYA…VADG), 468 to 513 (VLVT…TLSD), 515 to 565 (VYVM…ALHG), and 567 to 614 (AYLV…TLSM).

N-terminus is methylated by METTL11A/NTM1. Strongly expressed in skeletal muscle and weakly in heart. According to PubMed:15302408, not expressed in other tissues. According to PubMed:18719355, abundantly expressed in both embryonic skeletal and heart tissues.

Transcriptional repressor in MAPK/JNK signaling pathway to regulate cellular functions. Overexpression inhibits the transcriptional activities of both the TPA-response element (TRE) and serum response element (SRE). The polypeptide is Kelch-like protein 31 (KLHL31) (Homo sapiens (Human)).